We begin with the raw amino-acid sequence, 141 residues long: Superoxide dismutase [Cu-Zn], chloroplastic (141 aa).

3 residues coordinate Cu cation: His-33, His-35, and His-50. Cys-44 and Cys-133 form a disulfide bridge. Zn(2+)-binding residues include His-50, His-58, His-67, and Asp-70. Residue His-107 coordinates Cu cation.

Belongs to the Cu-Zn superoxide dismutase family. As to quaternary structure, homotetramer. Cu cation is required as a cofactor. Requires Zn(2+) as cofactor.

It localises to the plastid. Its subcellular location is the chloroplast. The catalysed reaction is 2 superoxide + 2 H(+) = H2O2 + O2. Functionally, destroys radicals which are normally produced within the cells and which are toxic to biological systems. In Pinus sylvestris (Scotch pine), this protein is Superoxide dismutase [Cu-Zn], chloroplastic (SODCP).